A 251-amino-acid polypeptide reads, in one-letter code: Histocompatibility antigen 60b (251 aa).

The first 24 residues, 1-24 (MAKSSLSLNWSLLVLLNFLGATLS), serve as a signal peptide directing secretion. Residues 25-212 (TGTDSLSCEL…NSDTQGLSFT (188 aa)) are Extracellular-facing. N-linked (GlcNAc...) asparagine glycans are attached at residues asparagine 63, asparagine 93, asparagine 126, and asparagine 189. A helical membrane pass occupies residues 213-233 (WIVIICIGGIVSFMAFMVFAW). Topologically, residues 234 to 251 (CMLKKKKGALCCSSSSTT) are cytoplasmic.

It belongs to the NKG2D ligand family. As to expression, in strain C57BL/6J, strongly expressed in cardiac muscle and skeletal muscle, with lower expression levels in spleen, liver, kidney and thymus. In strain BALB/cJ, weakly expressed in cardiac muscle, spleen, kidney and thymus.

The protein localises to the cell membrane. In terms of biological role, ligand for the KLRK1 immunosurveillance receptor. Binding to KLRK1 stimulates cell lysis in vitro. This Mus musculus (Mouse) protein is Histocompatibility antigen 60b.